The sequence spans 466 residues: Putative transcription factor bHLH041 (466 aa).

Disordered regions lie at residues 108–129 (PANSDYLRPPHYPSSSSSSLSP), 194–213 (LTGPSSPPSTSSSPQRKGRA), and 260–289 (RENATTHGEGSGGSGGGGRYTSGPSATQLQ). The span at 120–129 (PSSSSSSLSP) shows a compositional bias: low complexity. Residues 268 to 279 (EGSGGSGGGGRY) are compositionally biased toward gly residues. The 50-residue stretch at 285–334 (ATQLQHMISERKRREKLNESFQALRSLLPPGTKKDKASVLSIAREQLSSL) folds into the bHLH domain.

Homodimer.

It localises to the nucleus. The protein is Putative transcription factor bHLH041 (BHLH41) of Arabidopsis thaliana (Mouse-ear cress).